The following is a 120-amino-acid chain: Large ribosomal subunit protein uL18 (120 aa).

Belongs to the universal ribosomal protein uL18 family. In terms of assembly, part of the 50S ribosomal subunit; part of the 5S rRNA/L5/L18/L25 subcomplex. Contacts the 5S and 23S rRNAs.

Functionally, this is one of the proteins that bind and probably mediate the attachment of the 5S RNA into the large ribosomal subunit, where it forms part of the central protuberance. This is Large ribosomal subunit protein uL18 from Rhizobium johnstonii (strain DSM 114642 / LMG 32736 / 3841) (Rhizobium leguminosarum bv. viciae).